Consider the following 236-residue polypeptide: C-&gt;U-editing enzyme APOBEC-1 (236 aa).

In terms of domain architecture, CMP/dCMP-type deaminase spans 10-134; that stretch reads KDYTLRRRIE…RRNRQGLKDL (125 aa). His-61 is a Zn(2+) binding site. The active-site Proton donor is Glu-63. Positions 93 and 96 each coordinate Zn(2+).

It belongs to the cytidine and deoxycytidylate deaminase family. As to quaternary structure, homodimer. Interacts with A1CF; form an mRNA editing complex. Interacts with RBM47; form an mRNA editing complex. Found in a complex with CELF2/CUGBP2 and A1CF. Interacts with HNRPAB. Interacts with SYNCRIP. It depends on Zn(2+) as a cofactor. Expressed exclusively in the intestine.

It localises to the cytoplasm. The protein resides in the nucleus. It carries out the reaction a cytidine in mRNA + H2O + H(+) = a uridine in mRNA + NH4(+). It catalyses the reaction cytidine(6666) in apoB mRNA + H2O + H(+) = uridine(6666) in apoB mRNA + NH4(+). Cytidine deaminase catalyzing the cytidine to uridine postranscriptional editing of a variety of mRNAs. Form complexes with cofactors that confer differential editing activity and selectivity. Responsible for the postranscriptional editing of a CAA codon for Gln to a UAA codon for stop in the apolipoprotein B mRNA. Also involved in CGA (Arg) to UGA (Stop) editing in the NF1 mRNA. May also play a role in the epigenetic regulation of gene expression by participating in DNA demethylation. In Oryctolagus cuniculus (Rabbit), this protein is C-&gt;U-editing enzyme APOBEC-1.